The following is a 421-amino-acid chain: Ribulose bisphosphate carboxylase large chain (421 aa).

Substrate is bound by residues Asn68 and Thr118. Lys120 functions as the Proton acceptor in the catalytic mechanism. Lys122 provides a ligand contact to substrate. Mg(2+) contacts are provided by Lys146, Asp148, and Glu149. Lys146 is modified (N6-carboxylysine). The active-site Proton acceptor is the His239. Residues Arg240, His272, and Ser324 each coordinate substrate.

This sequence belongs to the RuBisCO large chain family. Type I subfamily. As to quaternary structure, heterohexadecamer of 8 large chains and 8 small chains; disulfide-linked. The disulfide link is formed within the large subunit homodimers. Mg(2+) serves as cofactor. Post-translationally, the disulfide bond which can form in the large chain dimeric partners within the hexadecamer appears to be associated with oxidative stress and protein turnover.

The protein localises to the plastid. The protein resides in the chloroplast. The catalysed reaction is 2 (2R)-3-phosphoglycerate + 2 H(+) = D-ribulose 1,5-bisphosphate + CO2 + H2O. It catalyses the reaction D-ribulose 1,5-bisphosphate + O2 = 2-phosphoglycolate + (2R)-3-phosphoglycerate + 2 H(+). RuBisCO catalyzes two reactions: the carboxylation of D-ribulose 1,5-bisphosphate, the primary event in carbon dioxide fixation, as well as the oxidative fragmentation of the pentose substrate in the photorespiration process. Both reactions occur simultaneously and in competition at the same active site. The chain is Ribulose bisphosphate carboxylase large chain (rbcL) from Aegilops crassa (Persian goatgrass).